We begin with the raw amino-acid sequence, 450 residues long: MAFKLWERFSQADNVFQALRPLTFISLLGLAPFRLNLNPRKEVQTSKFSFFAGIVHFLFFVLCFGISVKEGDSIIGYFFQTNITRFSDGTLRLTGILAMSTIFGFAMFKRQRLVSIIQNNIVVDEIFVRLGMKLDYRRILLSSFLISLGMLLFNVIYLCVSYSLLVSATISPSFVTFTTFALPHINISLMVFKFLCTTDLARSRFSMLNEILQDILDAHIEQLSALELSPMHSVVNHRRYSHRLRNLISTPMKRYSVTSVIRLNPEYAIKQVSNIHNLLCDICQTIEEYFTYPLLGIIAISFLFILFDDFYILEAILNPKRLDVFEADEFFAFFLMQLIWYIVIIVLIVEGSSRTILHSSYTAAIVHKILNITDDPELRDRLFRLSLQLSHRKVLFTAAGLFRLDRTLIFTITGAATCYLIILIQFRFTHHMDDTSSNSTNNLHSIHLGD.

Over 1 to 47 (MAFKLWERFSQADNVFQALRPLTFISLLGLAPFRLNLNPRKEVQTSK) the chain is Cytoplasmic. A helical membrane pass occupies residues 48–68 (FSFFAGIVHFLFFVLCFGISV). Residues 69-87 (KEGDSIIGYFFQTNITRFS) are Extracellular-facing. Asn82 is a glycosylation site (N-linked (GlcNAc...) asparagine). The chain crosses the membrane as a helical span at residues 88–108 (DGTLRLTGILAMSTIFGFAMF). Over 109 to 138 (KRQRLVSIIQNNIVVDEIFVRLGMKLDYRR) the chain is Cytoplasmic. A helical membrane pass occupies residues 139-159 (ILLSSFLISLGMLLFNVIYLC). Topologically, residues 160–171 (VSYSLLVSATIS) are extracellular. Residues 172-192 (PSFVTFTTFALPHINISLMVF) traverse the membrane as a helical segment. Over 193–292 (KFLCTTDLAR…CQTIEEYFTY (100 aa)) the chain is Cytoplasmic. A helical transmembrane segment spans residues 293 to 313 (PLLGIIAISFLFILFDDFYIL). The Extracellular portion of the chain corresponds to 314–329 (EAILNPKRLDVFEADE). A helical transmembrane segment spans residues 330–350 (FFAFFLMQLIWYIVIIVLIVE). The Cytoplasmic portion of the chain corresponds to 351 to 407 (GSSRTILHSSYTAAIVHKILNITDDPELRDRLFRLSLQLSHRKVLFTAAGLFRLDRT). A helical transmembrane segment spans residues 408–424 (LIFTITGAATCYLIILI). The Extracellular segment spans residues 425 to 450 (QFRFTHHMDDTSSNSTNNLHSIHLGD). Asn438 is a glycosylation site (N-linked (GlcNAc...) asparagine).

The protein belongs to the insect chemoreceptor superfamily. Gustatory receptor (GR) family. Gr2a subfamily. As to expression, in addition to expression in a large number of taste neurons, Gr28a is also expressed in a few nonchemosensory neurons, including the campaniform sensilla of the wing, leg stretch receptors, and multiple dendritic (MD) neurons in the abdomen. In larvea, is expressed in neurons of the terminal external chemosensory organ, the dorsal external chemosensory organ, as well as in the ventral and posterior pharyngeal sense organ.

Its subcellular location is the cell membrane. Probable gustatory receptor which mediates acceptance or avoidance behavior, depending on its substrates. Atypical expression also suggests nongustatory roles in the nervous system and tissues involved in proprioception, hygroreception, and other sensory modalities. It is also possible that it has chemosensory roles in the detection of internal ligands. The protein is Putative gustatory receptor 28a (Gr28a) of Drosophila melanogaster (Fruit fly).